Reading from the N-terminus, the 327-residue chain is Ribosomal RNA small subunit methyltransferase H (327 aa).

S-adenosyl-L-methionine is bound by residues 36-38 (GGH), aspartate 61, phenylalanine 88, aspartate 114, and glutamine 121.

The protein belongs to the methyltransferase superfamily. RsmH family.

It is found in the cytoplasm. It carries out the reaction cytidine(1402) in 16S rRNA + S-adenosyl-L-methionine = N(4)-methylcytidine(1402) in 16S rRNA + S-adenosyl-L-homocysteine + H(+). Its function is as follows. Specifically methylates the N4 position of cytidine in position 1402 (C1402) of 16S rRNA. This chain is Ribosomal RNA small subunit methyltransferase H, found in Chlorobium luteolum (strain DSM 273 / BCRC 81028 / 2530) (Pelodictyon luteolum).